The following is a 151-amino-acid chain: Large ribosomal subunit protein bL9 (151 aa).

The protein belongs to the bacterial ribosomal protein bL9 family.

Its function is as follows. Binds to the 23S rRNA. In Chlorobium phaeovibrioides (strain DSM 265 / 1930) (Prosthecochloris vibrioformis (strain DSM 265)), this protein is Large ribosomal subunit protein bL9.